Reading from the N-terminus, the 1259-residue chain is Neural cell adhesion molecule L1 (1259 aa).

The signal sequence occupies residues 1 to 19 (MVMMLWYVLPLLLCSPCLL). The Extracellular segment spans residues 20–1122 (IQIPDEYKGH…VSTTGSFASE (1103 aa)). Ig-like C2-type domains lie at 35 to 128 (PVIT…HEIQ), 138 to 225 (PKET…EPID), 239 to 327 (PRLL…YYVT), 332 to 419 (PYWL…AYIY), 424 to 506 (PARI…NNVT), and 517 to 600 (TQIT…DEVE). Intrachain disulfides connect C57–C113 and C157–C208. Residues N100, N202, N246, and N293 are each glycosylated (N-linked (GlcNAc...) asparagine). 2 disulfide bridges follow: C263–C311 and C353–C403. 3 N-linked (GlcNAc...) asparagine glycosylation sites follow: N432, N489, and N504. A disulfide bridge links C447 with C496. A disulfide bridge connects residues C538 and C590. 2 short sequence motifs (cell attachment site) span residues 553 to 555 (RGD) and 562 to 564 (RGD). 5 consecutive Fibronectin type-III domains span residues 613–711 (PVPH…TPEA), 716–809 (NPVD…SGED), 811–916 (PQVS…PEGV), 919–1014 (HPEA…MALF), and 1016–1116 (KPDF…VSTT). N-linked (GlcNAc...) asparagine glycosylation occurs at N670. Positions 697–724 (GEPSPVSETVVTPEAAPEKNPVDVRGEG) are disordered. Positions 712–724 (APEKNPVDVRGEG) are enriched in basic and acidic residues. 11 N-linked (GlcNAc...) asparagine glycosylation sites follow: N725, N776, N824, N848, N875, N968, N978, N1021, N1029, N1072, and N1106. A helical membrane pass occupies residues 1123–1145 (GWFIAFVSAIILLLLILLILCFI). The Cytoplasmic portion of the chain corresponds to 1146–1259 (KRSKGGKYSV…SPINPAVALE (114 aa)). Phosphoserine is present on residues S1165, R1179, S1180, S1183, S1196, S1245, S1246, and S1250. Disordered stretches follow at residues 1182 to 1209 (ESDN…SDDS) and 1228 to 1259 (IGQY…VALE). Residues 1243-1252 (NDSSGATSPI) show a composition bias toward polar residues.

Belongs to the immunoglobulin superfamily. L1/neurofascin/NgCAM family. Interacts with SHTN1; the interaction occurs in axonal growth cones. Interacts with isoform 2 of BSG. In terms of tissue distribution, isoform 2 is predominantly found in the brain, while isoform 1 is found in the peripheral nervous system.

Its subcellular location is the cell membrane. It localises to the cell projection. The protein localises to the growth cone. In terms of biological role, neural cell adhesion molecule involved in the dynamics of cell adhesion and in the generation of transmembrane signals at tyrosine kinase receptors. During brain development, critical in multiple processes, including neuronal migration, axonal growth and fasciculation, and synaptogenesis. In the mature brain, plays a role in the dynamics of neuronal structure and function, including synaptic plasticity. The polypeptide is Neural cell adhesion molecule L1 (L1cam) (Rattus norvegicus (Rat)).